A 270-amino-acid polypeptide reads, in one-letter code: Putative pyruvate, phosphate dikinase regulatory protein (270 aa).

ADP is bound at residue 151 to 158 (GVSRTSKT).

The protein belongs to the pyruvate, phosphate/water dikinase regulatory protein family. PDRP subfamily.

It catalyses the reaction N(tele)-phospho-L-histidyl/L-threonyl-[pyruvate, phosphate dikinase] + ADP = N(tele)-phospho-L-histidyl/O-phospho-L-threonyl-[pyruvate, phosphate dikinase] + AMP + H(+). It carries out the reaction N(tele)-phospho-L-histidyl/O-phospho-L-threonyl-[pyruvate, phosphate dikinase] + phosphate + H(+) = N(tele)-phospho-L-histidyl/L-threonyl-[pyruvate, phosphate dikinase] + diphosphate. Bifunctional serine/threonine kinase and phosphorylase involved in the regulation of the pyruvate, phosphate dikinase (PPDK) by catalyzing its phosphorylation/dephosphorylation. This chain is Putative pyruvate, phosphate dikinase regulatory protein, found in Bacillus velezensis (strain DSM 23117 / BGSC 10A6 / LMG 26770 / FZB42) (Bacillus amyloliquefaciens subsp. plantarum).